We begin with the raw amino-acid sequence, 1119 residues long: Nuclear matrix constituent protein 1 (1119 aa).

2 coiled-coil regions span residues Leu-140 to Gln-226 and Leu-328 to Arg-488. 4 disordered regions span residues Leu-846–Ala-884, Leu-903–Arg-974, Asn-989–Asp-1015, and Gly-1046–Met-1109. 2 stretches are compositionally biased toward basic residues: residues Gly-859 to Ser-876 and Lys-920 to Asn-929. A compositionally biased stretch (polar residues) spans Thr-1075–Gln-1085.

It belongs to the CRWN family.

It is found in the nucleus matrix. Its subcellular location is the nucleus lamina. Functionally, architectural component of nuclear structure that plays different roles in controlling nuclear size and morphology. This chain is Nuclear matrix constituent protein 1, found in Daucus carota subsp. sativus (Carrot).